A 370-amino-acid polypeptide reads, in one-letter code: 2-aminoethylphosphonate--pyruvate transaminase (370 aa).

An N6-(pyridoxal phosphate)lysine modification is found at K194.

The protein belongs to the class-V pyridoxal-phosphate-dependent aminotransferase family. PhnW subfamily. In terms of assembly, homodimer. The cofactor is pyridoxal 5'-phosphate.

The catalysed reaction is (2-aminoethyl)phosphonate + pyruvate = phosphonoacetaldehyde + L-alanine. In terms of biological role, involved in phosphonate degradation. This Paraburkholderia phymatum (strain DSM 17167 / CIP 108236 / LMG 21445 / STM815) (Burkholderia phymatum) protein is 2-aminoethylphosphonate--pyruvate transaminase.